A 304-amino-acid chain; its full sequence is MAKIEKNAPTMEKKPELFNIMEVDGVPTLILSKEWWEKVCNFQAKPDDLILATYPKSGTTWMHEILDMILNDGDVEKCKRAQTLDRHAFLELKFPHKEKPDLEFVLEMSSPQLIKTHLPSHLIPPSIWKENCKIVYVARNPKDCLVSYYHFHRMASFMPDPQNLEEFYEKFMSGKVVGGSWFDHVKGWWAAKDMHRILYLFYEDIKKDPKREIEKILKFLEKDISEEILNKIIYHTSFDVMKQNPMTNYTTLPTSIMDHSISPFMRKGMPGDWKNYFTVAQNEEFDKDYQKKMAGSTLTFRTEI.

56–61 (KSGTTW) contacts 3'-phosphoadenylyl sulfate. Position 115–117 (115–117 (KTH)) interacts with substrate. Residue His117 is the Proton acceptor of the active site. 3'-phosphoadenylyl sulfate is bound by residues Arg139, Ser147, Tyr202, 236-241 (TSFDVM), and 264-268 (FMRKG).

Belongs to the sulfotransferase 1 family. In terms of tissue distribution, not detectable in any of the tissues tested. Expressed in the small intestine.

It localises to the cytoplasm. It carries out the reaction an alcohol + 3'-phosphoadenylyl sulfate = an alkyl sulfate + adenosine 3',5'-bisphosphate + H(+). The catalysed reaction is a phenol + 3'-phosphoadenylyl sulfate = an aryl sulfate + adenosine 3',5'-bisphosphate + H(+). It catalyses the reaction lithocholate + 3'-phosphoadenylyl sulfate = lithocholate sulfate + adenosine 3',5'-bisphosphate + H(+). In terms of biological role, sulfotransferase that utilizes 3'-phospho-5'-adenylyl sulfate (PAPS) as sulfonate donor. Has sulfotransferase activity towards various substrates, such as bile acids, thyroid hormones and toward xenobiotic compounds such as chloro phenols and hydroxypyrenes. Lithocholic acid appears to be the best substrate among the endogenous compounds tested and 3,3',5,5'-tetrachloro-4,4'-biphenyldiol shows the highest specific activity among the xenobiotic compounds. Exhibits weak sulphating activity and only toward chloro phenols (pentachlorophenol and 3,3',5,5'-tetrachloro-4,4'-biphenyldiol). The chain is Sulfotransferase 1C3 (SULT1C3) from Homo sapiens (Human).